A 340-amino-acid polypeptide reads, in one-letter code: Putative inactive cytochrome P450 family member 4Z2 (340 aa).

Residues 1-9 (MEPSWLQEL) are Cytoplasmic-facing. A helical; Signal-anchor for type II membrane protein membrane pass occupies residues 10–30 (MAHPFLLLILLCMSLLLFQVI). Residues 31–340 (RLYQRRRWTI…AKYPEHQQRC (310 aa)) are Lumenal-facing.

The protein belongs to the cytochrome P450 family. It depends on heme as a cofactor. In terms of tissue distribution, detected at low levels in mammary gland and mammary carcinoma.

It localises to the membrane. This chain is Putative inactive cytochrome P450 family member 4Z2 (CYP4Z2P), found in Homo sapiens (Human).